The following is a 397-amino-acid chain: Acid extracellular protease (397 aa).

The first 17 residues, 1 to 17 (MQFSLATLTTLLAFVAA), serve as a signal peptide directing secretion. In terms of domain architecture, Peptidase A1 spans 61–378 (YQVQISLGGQ…DLERDEVSIA (318 aa)). Asp77 is an active-site residue. N-linked (GlcNAc...) asparagine glycosylation occurs at Asn88. A disulfide bond links Cys93 and Cys100. The active site involves Asp264. Cysteines 303 and 343 form a disulfide. N-linked (GlcNAc...) asparagine glycosylation is found at Asn310 and Asn314.

It belongs to the peptidase A1 family.

It is found in the secreted. This chain is Acid extracellular protease (AXP1), found in Yarrowia lipolytica (strain CLIB 122 / E 150) (Yeast).